The sequence spans 702 residues: Ribosomal RNA large subunit methyltransferase K/L (702 aa).

Residues 43–154 (LVYQSLMWSR…KETASIALDL (112 aa)) form the THUMP domain.

The protein belongs to the methyltransferase superfamily. RlmKL family.

It localises to the cytoplasm. The enzyme catalyses guanosine(2445) in 23S rRNA + S-adenosyl-L-methionine = N(2)-methylguanosine(2445) in 23S rRNA + S-adenosyl-L-homocysteine + H(+). The catalysed reaction is guanosine(2069) in 23S rRNA + S-adenosyl-L-methionine = N(2)-methylguanosine(2069) in 23S rRNA + S-adenosyl-L-homocysteine + H(+). Specifically methylates the guanine in position 2445 (m2G2445) and the guanine in position 2069 (m7G2069) of 23S rRNA. This Shigella boydii serotype 4 (strain Sb227) protein is Ribosomal RNA large subunit methyltransferase K/L.